The following is a 444-amino-acid chain: Cadaverine/lysine antiporter (444 aa).

Helical transmembrane passes span 7 to 27 (IGLFACTGVVAGNMMGSGIAL), 35 to 55 (IGGIAIWGWIISIIGAMSLAY), 95 to 115 (IGNLAIGITAVSYLSTFFPVL), 123 to 143 (IACIAIVWVFTFVNMLGGTWV), 149 to 169 (IGLVLVLIPVVMTAIVGWHWF), 193 to 213 (ILLCLWAFVGVESAAVSTGMV), 222 to 242 (LATMLGTGLAGIVYIAATQVL), 273 to 293 (LVSAFTAFACLTSLGSWMMLV), 323 to 343 (LLLAAVKMTALMILITLMNSA), 354 to 374 (LTGIAVLLTMLPYFYSCVDLI), 384 to 404 (FVSLICSVLGCVFCFIALMGA), and 405 to 425 (SSFELAGTFIVSLIILMFYAR).

It belongs to the amino acid-polyamine-organocation (APC) superfamily. Basic amino acid/polyamine antiporter (APA) (TC 2.A.3.2) family.

The protein localises to the cell inner membrane. The catalysed reaction is cadaverine(in) + L-lysine(out) = cadaverine(out) + L-lysine(in). In terms of biological role, under acidic conditions, in the presence of lysine, functions as a cadaverine:lysine antiporter that facilitates the excretion of cadaverine and the uptake of lysine. This chain is Cadaverine/lysine antiporter (cadB), found in Escherichia coli O157:H7.